The following is an 87-amino-acid chain: Co-chaperonin GroES (87 aa).

This sequence belongs to the GroES chaperonin family. Heptamer of 7 subunits arranged in a ring. Interacts with the chaperonin GroEL.

It is found in the cytoplasm. Together with the chaperonin GroEL, plays an essential role in assisting protein folding. The GroEL-GroES system forms a nano-cage that allows encapsulation of the non-native substrate proteins and provides a physical environment optimized to promote and accelerate protein folding. GroES binds to the apical surface of the GroEL ring, thereby capping the opening of the GroEL channel. The protein is Co-chaperonin GroES of Campylobacter hominis (strain ATCC BAA-381 / DSM 21671 / CCUG 45161 / LMG 19568 / NCTC 13146 / CH001A).